The chain runs to 376 residues: Probable cysteine protease RDL3 (376 aa).

The first 27 residues, 1-27 (MAISFRTLALLTLSVLLISISLGVVTA), serve as a signal peptide directing secretion. A propeptide spans 28–126 (TESQRNEGEV…ERYQYKEGDV (99 aa)) (activation peptide). An N-linked (GlcNAc...) asparagine glycan is attached at asparagine 80. 2 disulfides stabilise this stretch: cysteine 149-cysteine 192 and cysteine 183-cysteine 226. Residue cysteine 152 is part of the active site. Asparagine 270 is a glycosylation site (N-linked (GlcNAc...) asparagine). Cysteine 283 and cysteine 336 are joined by a disulfide. Active-site residues include histidine 290 and asparagine 311. Asparagine 349 is a glycosylation site (N-linked (GlcNAc...) asparagine).

Belongs to the peptidase C1 family. As to expression, expressed in root hairs.

Its function is as follows. Probable thiol protease. This Arabidopsis thaliana (Mouse-ear cress) protein is Probable cysteine protease RDL3.